A 215-amino-acid polypeptide reads, in one-letter code: Charged multivesicular body protein 5 (215 aa).

The stretch at 29-81 (QMDEKINGLNQELLAYDKQIKATRPGPAQNAIKQKAIRVLQQKKMYERQRDQM) forms a coiled coil. Residues 186-215 (TPSVPTTDPHQSSVDEYGLPIGQEASQQVV) are disordered. The span at 188 to 199 (SVPTTDPHQSSV) shows a compositional bias: polar residues.

Belongs to the SNF7 family. In terms of assembly, probable peripherally associated component of the endosomal sorting required for transport complex III (ESCRT-III).

The protein resides in the endosome membrane. Probable peripherally associated component of the endosomal sorting required for transport complex III (ESCRT-III) which is involved in multivesicular bodies (MVBs) formation and sorting of endosomal cargo proteins into MVBs. MVBs contain intraluminal vesicles (ILVs) that are generated by invagination and scission from the limiting membrane of the endosome and are delivered to lysosomes enabling degradation of membrane proteins. The protein is Charged multivesicular body protein 5 (chmp5) of Dictyostelium discoideum (Social amoeba).